A 471-amino-acid polypeptide reads, in one-letter code: MSKKYDAGVKEYRDTYWTPEYVPLDTDLLACFKCTGQEGVPREEVAAAVAAESSTGTWSTVWSELLTDLEFYKGRCYRIEDVPGDPEAFYAFIAYPLDLFEEGSITNVLTSLVGNVFGFKALRHLRLEDIRFPIAFIKTCGGPPNGIVVERDRLNKYGRPLLGCTIKPKLGLSGKNYGRVVYECLRGGLDLTKDDENINSQPFQRWRERFEFVAEAVKLAQRETGEVKGHYLNCTANTPEELYERAEFAKELDMPIIMHDYITGGFTANTGLANWCRKNGMLLHIHRAMHAVIDRHPKHGIHFRVLAKCLRLSGGDQLHTGTVVGKLEGDRQTTLGYIDNLRESFVPEDRSRGNFFDQDWGSMPGVFAVASGGIHVWHMPALLAIFGDDSCLQFGGGTHGHPWGSAAGAAANRVALEACVKARNAGREIEKESRDILMEAAKHSPELAIALETWKEIKFEFDTVDKLDVQG.

Asn115 and Thr165 together coordinate substrate. Lys167 (proton acceptor) is an active-site residue. A substrate-binding site is contributed by Lys169. Residues Lys193, Asp195, and Glu196 each coordinate Mg(2+). Lys193 bears the N6-carboxylysine mark. Catalysis depends on His286, which acts as the Proton acceptor. Residues Arg287, His319, and Ser371 each contribute to the substrate site.

The protein belongs to the RuBisCO large chain family. Type I subfamily. In terms of assembly, heterohexadecamer of 8 large chains and 8 small chains. Mg(2+) is required as a cofactor.

It localises to the carboxysome. The catalysed reaction is 2 (2R)-3-phosphoglycerate + 2 H(+) = D-ribulose 1,5-bisphosphate + CO2 + H2O. It catalyses the reaction D-ribulose 1,5-bisphosphate + O2 = 2-phosphoglycolate + (2R)-3-phosphoglycerate + 2 H(+). In terms of biological role, ruBisCO catalyzes two reactions: the carboxylation of D-ribulose 1,5-bisphosphate, the primary event in carbon dioxide fixation, as well as the oxidative fragmentation of the pentose substrate in the photorespiration process. Both reactions occur simultaneously and in competition at the same active site. The polypeptide is Ribulose bisphosphate carboxylase large chain (Prochlorococcus marinus (strain MIT 9301)).